A 313-amino-acid chain; its full sequence is Porphobilinogen deaminase (313 aa).

Cysteine 243 carries the post-translational modification S-(dipyrrolylmethanemethyl)cysteine.

The protein belongs to the HMBS family. As to quaternary structure, monomer. The cofactor is dipyrromethane.

It carries out the reaction 4 porphobilinogen + H2O = hydroxymethylbilane + 4 NH4(+). The protein operates within porphyrin-containing compound metabolism; protoporphyrin-IX biosynthesis; coproporphyrinogen-III from 5-aminolevulinate: step 2/4. Functionally, tetrapolymerization of the monopyrrole PBG into the hydroxymethylbilane pre-uroporphyrinogen in several discrete steps. In Bordetella petrii (strain ATCC BAA-461 / DSM 12804 / CCUG 43448), this protein is Porphobilinogen deaminase.